The following is a 666-amino-acid chain: MVDDEDDITFDSPEEEIAHYREKYRQALDMLTDTRAELEEFQQSSKELEDEMEQELAANDKQQADLREKIKRLDAEKEEWRTKHIALQKMHSSTTSAMQREMDNLRSERDKTLVALRDLEMGNDELERNERVAISSLLDLESKYNRAIEEKTLLEQDLAQKDELETETQRLKDELREANEEISILKDQLARAIATPPSSVSTSSPIHDAACDLSRIHLSDDINASPLPPPVPSKNKSITPEGHSPRRGLSRSGTMSSIPVASPSTKRFSQQIPHSPSFSTLSRSTTSRNLAAAAGTPGSPALARSRSGIPQASPARGIVLASHQQTKSRGFKLLHDLQARLKATDDKLGGAKVPRRNVSNPASVFGVGKRVTSTTSTTSSTTTAPAPHARVTALAKDHNTTPTAQSQQFPGSGIMSPGWVLVGEGEGEDTPTGPWSMTLPAEPNSPLDPTFRSSSTTSNRSLPSRPGIPSPLASGSARSTTSGTAQRQAGQRPSSRLGLKASRRDSEARPLSPSMIPVPSFSSRPMSPDVYQPLRSATPTSGFSSFSASASTSNPPRPNSRTGKRNPIGRGPPPLSSSTRLHHQRSRQSLSGAGPTPTTGADKVERAKRGPRRSSLSNMDKPSLMSASSGSRTPSGRPTSVHVFRETPPPVPRIPSAILKESKVKK.

A coiled-coil region spans residues 14–195; that stretch reads EEEIAHYREK…KDQLARAIAT (182 aa). Disordered stretches follow at residues 40 to 64, 220 to 310, 369 to 388, and 397 to 666; these read EFQQSSKELEDEMEQELAANDKQQA, DDIN…SGIP, KRVTSTTSTTSSTTTAPAPH, and DHNT…KVKK. The span at 251–274 shows a compositional bias: polar residues; sequence RSGTMSSIPVASPSTKRFSQQIPH. 2 stretches are compositionally biased toward low complexity: residues 275-287 and 372-383; these read SPSFSTLSRSTTS and TSTTSTTSSTTT. Residues 400-410 show a composition bias toward polar residues; it reads TTPTAQSQQFP. 3 stretches are compositionally biased toward low complexity: residues 449–465, 473–485, and 536–554; these read PTFRSSSTTSNRSLPSR, ASGSARSTTSGTA, and SATPTSGFSSFSASASTSN. Polar residues-rich tracts occupy residues 587–599 and 614–638; these read RQSLSGAGPTPTT and SSLSNMDKPSLMSASSGSRTPSGRP.

The protein belongs to the nudE family. As to quaternary structure, self-associates. Interacts with PAC1.

It is found in the cytoplasm. Its subcellular location is the cytoskeleton. Required for nuclear migration. This is Nuclear distribution protein nudE homolog 1 (NDE1) from Cryptococcus neoformans var. neoformans serotype D (strain JEC21 / ATCC MYA-565) (Filobasidiella neoformans).